The primary structure comprises 245 residues: MLDTSPVSIRSQLNPLICQLAEVILSHWQEYLSLSLYKLPDGLGYVEGKLEGERLVIENRCYQAPQFRKMHLELAKVGKGLDILHCVMFPNPDYSLPMFGCDIVANSRAVSAAIADLSPANAELTLSPTYQKALSQLPSLDFRESRDLPEWGDIFSEYCLFIRPTNAEEETQFINRVADFLKIHCQLAVQSQPVSVEQETLNLAGQKYYCTKQQQNDKTRRVLEKAFGQEWADKYITQVLFDLPY.

The protein belongs to the HY2 family.

The enzyme catalyses (2R,3Z)-phycocyanobilin + 4 oxidized [2Fe-2S]-[ferredoxin] = biliverdin IXalpha + 4 reduced [2Fe-2S]-[ferredoxin] + 4 H(+). Catalyzes the four-electron reduction of biliverdin IX-alpha (2-electron reduction at both the A and D rings); the reaction proceeds via an isolatable 2-electron intermediate, 181,182-dihydrobiliverdin. The polypeptide is Phycocyanobilin:ferredoxin oxidoreductase (Rippkaea orientalis (strain PCC 8801 / RF-1) (Cyanothece sp. (strain PCC 8801))).